A 326-amino-acid polypeptide reads, in one-letter code: MKNIAIIGASGYTGAQLTALIHAEAELTIQGLYVSENSLDKGKPLADLYPSYSHIALTLSPLSEDAKAKIVAEADAVVLATEHSVSLHLAAWFYSQGLAVFDLSGAYRFSDVAQYPKWYGFEHEYPEVLAKAVYGLAEWNAKEIAATKMIAVPGCYPTASLTALKPLASLLTSAYPVINAVSGVTGAGRKAQLHTSFCEVSLTPYGVLGHRHQPEIATQLGQEVIFTPHLGNFKRGILATITVQLKPGTTTADVAAAYSVYDQAPLVTVKHNQFPKVDDVVLTPNCHLGWKFDENSGYLVVASAIDNLMKGAASQALQCIKIHFNL.

Residue Cys-155 is part of the active site.

Belongs to the NAGSA dehydrogenase family. Type 1 subfamily.

The protein localises to the cytoplasm. It catalyses the reaction N-acetyl-L-glutamate 5-semialdehyde + phosphate + NADP(+) = N-acetyl-L-glutamyl 5-phosphate + NADPH + H(+). Its pathway is amino-acid biosynthesis; L-arginine biosynthesis; N(2)-acetyl-L-ornithine from L-glutamate: step 3/4. In terms of biological role, catalyzes the NADPH-dependent reduction of N-acetyl-5-glutamyl phosphate to yield N-acetyl-L-glutamate 5-semialdehyde. This is N-acetyl-gamma-glutamyl-phosphate reductase from Shewanella baltica (strain OS155 / ATCC BAA-1091).